The following is a 129-amino-acid chain: Glycine cleavage system H protein (129 aa).

The Lipoyl-binding domain maps to 24–106 (LLKIGVSEFA…IGDGWLVILK (83 aa)). Lys-65 carries the N6-lipoyllysine modification.

The protein belongs to the GcvH family. As to quaternary structure, the glycine cleavage system is composed of four proteins: P, T, L and H. (R)-lipoate serves as cofactor.

Functionally, the glycine cleavage system catalyzes the degradation of glycine. The H protein shuttles the methylamine group of glycine from the P protein to the T protein. The chain is Glycine cleavage system H protein from Prochlorococcus marinus (strain MIT 9301).